Reading from the N-terminus, the 347-residue chain is S-adenosylmethionine:tRNA ribosyltransferase-isomerase (347 aa).

It belongs to the QueA family. In terms of assembly, monomer.

It localises to the cytoplasm. It carries out the reaction 7-aminomethyl-7-carbaguanosine(34) in tRNA + S-adenosyl-L-methionine = epoxyqueuosine(34) in tRNA + adenine + L-methionine + 2 H(+). It functions in the pathway tRNA modification; tRNA-queuosine biosynthesis. Functionally, transfers and isomerizes the ribose moiety from AdoMet to the 7-aminomethyl group of 7-deazaguanine (preQ1-tRNA) to give epoxyqueuosine (oQ-tRNA). This Halalkalibacterium halodurans (strain ATCC BAA-125 / DSM 18197 / FERM 7344 / JCM 9153 / C-125) (Bacillus halodurans) protein is S-adenosylmethionine:tRNA ribosyltransferase-isomerase.